The sequence spans 180 residues: Putative 5'(3')-deoxyribonucleotidase (180 aa).

Catalysis depends on Asp9, which acts as the Nucleophile. The Mg(2+) site is built by Asp9, Asp11, and Asp135. Asp11 acts as the Proton donor in catalysis.

Belongs to the 5'(3')-deoxyribonucleotidase family. It depends on Mg(2+) as a cofactor.

Functionally, dephosphorylates the 5' and 2'(3')-phosphates of deoxyribonucleotides. The chain is Putative 5'(3')-deoxyribonucleotidase from Staphylococcus aureus (strain Mu50 / ATCC 700699).